The sequence spans 355 residues: Guanine nucleotide-binding protein alpha-12 subunit (355 aa).

The G-alpha domain maps to 28 to 355; sequence RQINLLLLGS…EQNLKTLMMQ (328 aa). A G1 motif region spans residues 31–44; that stretch reads NLLLLGSGESGKST. GTP is bound by residues 36-43, 176-182, 201-205, 270-273, and Ala-327; these read GSGESGKS, LFCRKAT, DVGGQ, and NKND. Mg(2+) contacts are provided by Ser-43 and Thr-182. Residues 174–182 form a G2 motif region; sequence DILFCRKAT. Positions 197–206 are G3 motif; the sequence is FRFIDVGGQR. The segment at 266 to 273 is G4 motif; it reads ILFMNKND. The segment at 325–330 is G5 motif; it reads TTAVDT.

This sequence belongs to the G-alpha family. As to quaternary structure, g proteins are composed of 3 units; alpha, beta and gamma. The alpha chain contains the guanine nucleotide binding site.

Functionally, guanine nucleotide-binding proteins (G proteins) are involved as modulators or transducers in various transmembrane signaling systems. May play a role in resistance to fungal infection in the epidermis by regulating the up-regulation of several antimicrobial peptides of the NLP and CNC families. Upstream of plc-3, egl-8, tpa-1 and the p38-like pathway, required for the expression of antimicrobial peptide nlp-29 in the epidermis in response to fungal infection or physical injury. The chain is Guanine nucleotide-binding protein alpha-12 subunit (gpa-12) from Caenorhabditis briggsae.